Here is a 211-residue protein sequence, read N- to C-terminus: Histidine biosynthesis bifunctional protein HisIE (211 aa).

Residues 1–117 are phosphoribosyl-AMP cyclohydrolase; that stretch reads MSTQTNTKSD…CWLDGNAHPF (117 aa). The tract at residues 118-211 is phosphoribosyl-ATP pyrophosphohydrolase; the sequence is LNNLAELIAS…LARHQKAQRK (94 aa).

This sequence in the N-terminal section; belongs to the PRA-CH family. In the C-terminal section; belongs to the PRA-PH family.

Its subcellular location is the cytoplasm. It catalyses the reaction 1-(5-phospho-beta-D-ribosyl)-ATP + H2O = 1-(5-phospho-beta-D-ribosyl)-5'-AMP + diphosphate + H(+). The catalysed reaction is 1-(5-phospho-beta-D-ribosyl)-5'-AMP + H2O = 1-(5-phospho-beta-D-ribosyl)-5-[(5-phospho-beta-D-ribosylamino)methylideneamino]imidazole-4-carboxamide. It functions in the pathway amino-acid biosynthesis; L-histidine biosynthesis; L-histidine from 5-phospho-alpha-D-ribose 1-diphosphate: step 2/9. It participates in amino-acid biosynthesis; L-histidine biosynthesis; L-histidine from 5-phospho-alpha-D-ribose 1-diphosphate: step 3/9. The polypeptide is Histidine biosynthesis bifunctional protein HisIE (Shewanella oneidensis (strain ATCC 700550 / JCM 31522 / CIP 106686 / LMG 19005 / NCIMB 14063 / MR-1)).